We begin with the raw amino-acid sequence, 340 residues long: Anthranilate phosphoribosyltransferase (340 aa).

Residues G83, 86 to 87, T91, 93 to 96, 111 to 119, and S123 each bind 5-phospho-alpha-D-ribose 1-diphosphate; these read GD, NVST, and KHGNRSVSS. G83 is an anthranilate binding site. Residue S95 coordinates Mg(2+). N114 is an anthranilate binding site. R169 provides a ligand contact to anthranilate. The Mg(2+) site is built by D228 and E229.

It belongs to the anthranilate phosphoribosyltransferase family. As to quaternary structure, homodimer. Mg(2+) serves as cofactor.

The catalysed reaction is N-(5-phospho-beta-D-ribosyl)anthranilate + diphosphate = 5-phospho-alpha-D-ribose 1-diphosphate + anthranilate. The protein operates within amino-acid biosynthesis; L-tryptophan biosynthesis; L-tryptophan from chorismate: step 2/5. Catalyzes the transfer of the phosphoribosyl group of 5-phosphorylribose-1-pyrophosphate (PRPP) to anthranilate to yield N-(5'-phosphoribosyl)-anthranilate (PRA). The protein is Anthranilate phosphoribosyltransferase of Aquifex aeolicus (strain VF5).